The following is a 331-amino-acid chain: MENLEGIVDRAKDAVAKAESEQSLEQLRVDYLGKKGRITQLLKELGRLDAAERPAAGAKINEAKLLVQDLINEAKSELSSKNEAAKLAAESIDVTLPGRKESLGTLHPVTRTMLRIEDFFARSGYTVEEGPEIQDDYHNFEALNIPSHHPARAMHDTFYFDPKTLLRTHTSPVQIRVMESSKPPFRMICPGRVYRCDSDMTHTPMFHQVEGLMVDKHVSFADLKSTIVEFLREFFEKDLEVRFRPSYFPFTEPSAEVDIEWGRNEDGSIKWLEVMGCGMVHPKVFEAAGVDSETYSGFAFGMGVERLAMLRYGVNDLRMFFENDMRFLDQF.

E252 is a Mg(2+) binding site.

It belongs to the class-II aminoacyl-tRNA synthetase family. Phe-tRNA synthetase alpha subunit type 1 subfamily. In terms of assembly, tetramer of two alpha and two beta subunits. The cofactor is Mg(2+).

It localises to the cytoplasm. It catalyses the reaction tRNA(Phe) + L-phenylalanine + ATP = L-phenylalanyl-tRNA(Phe) + AMP + diphosphate + H(+). This Hahella chejuensis (strain KCTC 2396) protein is Phenylalanine--tRNA ligase alpha subunit.